Reading from the N-terminus, the 354-residue chain is Dihydroorotate dehydrogenase (quinone) (354 aa).

Residues 67–71 (AGFDK) and Thr91 contribute to the FMN site. Lys71 lines the substrate pocket. 116 to 120 (NRMGF) serves as a coordination point for substrate. Residues Asn144 and Asn177 each contribute to the FMN site. Position 177 (Asn177) interacts with substrate. Ser180 acts as the Nucleophile in catalysis. Asn182 is a binding site for substrate. Residues Lys213 and Thr241 each contribute to the FMN site. 242-243 (NT) contacts substrate. FMN contacts are provided by residues Gly265, Gly294, and 315 to 316 (YT).

Belongs to the dihydroorotate dehydrogenase family. Type 2 subfamily. As to quaternary structure, monomer. FMN is required as a cofactor.

It localises to the cell membrane. It carries out the reaction (S)-dihydroorotate + a quinone = orotate + a quinol. The protein operates within pyrimidine metabolism; UMP biosynthesis via de novo pathway; orotate from (S)-dihydroorotate (quinone route): step 1/1. Catalyzes the conversion of dihydroorotate to orotate with quinone as electron acceptor. The chain is Dihydroorotate dehydrogenase (quinone) from Mycolicibacterium smegmatis (strain ATCC 700084 / mc(2)155) (Mycobacterium smegmatis).